The sequence spans 132 residues: Large-conductance mechanosensitive channel (132 aa).

Helical transmembrane passes span Phe11–Gly31 and Gly75–Val95.

The protein belongs to the MscL family. In terms of assembly, homopentamer.

The protein localises to the cell inner membrane. In terms of biological role, channel that opens in response to stretch forces in the membrane lipid bilayer. May participate in the regulation of osmotic pressure changes within the cell. The sequence is that of Large-conductance mechanosensitive channel from Synechococcus sp. (strain JA-3-3Ab) (Cyanobacteria bacterium Yellowstone A-Prime).